Consider the following 176-residue polypeptide: Ribosome maturation factor RimM (176 aa).

Positions 97 to 176 constitute a PRC barrel domain; the sequence is GDEFYWRELV…TIQVDWDPSF (80 aa).

Belongs to the RimM family. In terms of assembly, binds ribosomal protein uS19.

It is found in the cytoplasm. An accessory protein needed during the final step in the assembly of 30S ribosomal subunit, possibly for assembly of the head region. Essential for efficient processing of 16S rRNA. May be needed both before and after RbfA during the maturation of 16S rRNA. It has affinity for free ribosomal 30S subunits but not for 70S ribosomes. In Pseudoalteromonas atlantica (strain T6c / ATCC BAA-1087), this protein is Ribosome maturation factor RimM.